The chain runs to 161 residues: Eukaryotic translation initiation factor 5A-1 (161 aa).

The segment covering Met1–Ala12 has biased composition (basic and acidic residues). The interval Met1–Pro21 is disordered. Lys52 carries the hypusine modification.

It belongs to the eIF-5A family. In terms of processing, lys-52 undergoes hypusination, a unique post-translational modification that consists in the addition of a butylamino group from spermidine to lysine side chain, leading to the formation of the unusual amino acid hypusine. eIF-5As are the only known proteins to undergo this modification, which is essential for their function.

Translation factor that promotes translation elongation and termination, particularly upon ribosome stalling at specific amino acid sequence contexts. Binds between the exit (E) and peptidyl (P) site of the ribosome and promotes rescue of stalled ribosome: specifically required for efficient translation of polyproline-containing peptides as well as other motifs that stall the ribosome. Acts as a ribosome quality control (RQC) cofactor by joining the RQC complex to facilitate peptidyl transfer during CAT tailing step. The chain is Eukaryotic translation initiation factor 5A-1 from Medicago sativa (Alfalfa).